We begin with the raw amino-acid sequence, 251 residues long: MAKSSEFVNEESSEDESSVSSIEDQHSSKEPEQSVESNNHGESNAQEDVAEIAGLEKVQGKPVLTTNDLKKESNVFLVRLPPGMSADQISQLKVGSKPTVELKQENENTYQIREESTSSVRVFLPDEQGSYTSNEIKTGYVITETPKISQNIDTGITIPTQAPLVPQRKNLRQHFRPIGDAVGPESEPEAEPKSGIKEHILQETGDATVEELQNKGKEKQKELKKGKREKKDEEEKPKKKKQKKSSKKEKN.

Disordered regions lie at residues 1-66 (MAKS…VLTT) and 163-251 (PLVP…KEKN). The segment covering 8–17 (VNEESSEDES) has biased composition (acidic residues). A Phosphoserine modification is found at Ser-13. Basic and acidic residues predominate over residues 23–32 (EDQHSSKEPE). Polar residues predominate over residues 34–46 (SVESNNHGESNAQ). Basic and acidic residues-rich tracts occupy residues 190-201 (AEPKSGIKEHIL) and 212-237 (LQNKGKEKQKELKKGKREKKDEEEKP). Basic residues predominate over residues 238–251 (KKKKQKKSSKKEKN).

This sequence belongs to the eukaryotic RPA34 RNA polymerase subunit family. Component of the RNA polymerase I (Pol I) complex.

The protein resides in the nucleus. The protein localises to the nucleolus. DNA-dependent RNA polymerase catalyzes the transcription of DNA into RNA using the four ribonucleoside triphosphates as substrates. Component of RNA polymerase I which synthesizes ribosomal RNA precursors. The polypeptide is DNA-directed RNA polymerase I subunit rpa34 (rpa34) (Schizosaccharomyces pombe (strain 972 / ATCC 24843) (Fission yeast)).